Consider the following 155-residue polypeptide: Aspartate carbamoyltransferase regulatory chain (155 aa).

4 residues coordinate Zn(2+): Cys-110, Cys-115, Cys-139, and Cys-142.

Belongs to the PyrI family. In terms of assembly, contains catalytic and regulatory chains. The cofactor is Zn(2+).

Its function is as follows. Involved in allosteric regulation of aspartate carbamoyltransferase. This Yersinia pestis bv. Antiqua (strain Antiqua) protein is Aspartate carbamoyltransferase regulatory chain.